The following is a 315-amino-acid chain: Ribosomal protein L11 methyltransferase (315 aa).

4 residues coordinate S-adenosyl-L-methionine: T164, G185, D207, and N249.

This sequence belongs to the methyltransferase superfamily. PrmA family.

It is found in the cytoplasm. The enzyme catalyses L-lysyl-[protein] + 3 S-adenosyl-L-methionine = N(6),N(6),N(6)-trimethyl-L-lysyl-[protein] + 3 S-adenosyl-L-homocysteine + 3 H(+). Functionally, methylates ribosomal protein L11. The sequence is that of Ribosomal protein L11 methyltransferase from Lactobacillus gasseri (strain ATCC 33323 / DSM 20243 / BCRC 14619 / CIP 102991 / JCM 1131 / KCTC 3163 / NCIMB 11718 / NCTC 13722 / AM63).